Reading from the N-terminus, the 189-residue chain is UPF0301 protein CAB604 (189 aa).

The protein belongs to the UPF0301 (AlgH) family.

This Chlamydia abortus (strain DSM 27085 / S26/3) (Chlamydophila abortus) protein is UPF0301 protein CAB604.